A 450-amino-acid chain; its full sequence is Phosphoglucosamine mutase (450 aa).

Ser101 acts as the Phosphoserine intermediate in catalysis. Positions 101, 240, 242, and 244 each coordinate Mg(2+). A Phosphoserine modification is found at Ser101.

Belongs to the phosphohexose mutase family. Mg(2+) serves as cofactor. In terms of processing, activated by phosphorylation.

It carries out the reaction alpha-D-glucosamine 1-phosphate = D-glucosamine 6-phosphate. Catalyzes the conversion of glucosamine-6-phosphate to glucosamine-1-phosphate. The polypeptide is Phosphoglucosamine mutase (Streptococcus pneumoniae (strain Hungary19A-6)).